The following is a 417-amino-acid chain: Serine hydroxymethyltransferase (417 aa).

Residues leucine 121 and 125 to 127 (GHL) contribute to the (6S)-5,6,7,8-tetrahydrofolate site. Lysine 229 carries the post-translational modification N6-(pyridoxal phosphate)lysine. Position 355 to 357 (355 to 357 (SPF)) interacts with (6S)-5,6,7,8-tetrahydrofolate.

Belongs to the SHMT family. As to quaternary structure, homodimer. The cofactor is pyridoxal 5'-phosphate.

It localises to the cytoplasm. It carries out the reaction (6R)-5,10-methylene-5,6,7,8-tetrahydrofolate + glycine + H2O = (6S)-5,6,7,8-tetrahydrofolate + L-serine. Its pathway is one-carbon metabolism; tetrahydrofolate interconversion. It functions in the pathway amino-acid biosynthesis; glycine biosynthesis; glycine from L-serine: step 1/1. In terms of biological role, catalyzes the reversible interconversion of serine and glycine with tetrahydrofolate (THF) serving as the one-carbon carrier. This reaction serves as the major source of one-carbon groups required for the biosynthesis of purines, thymidylate, methionine, and other important biomolecules. Also exhibits THF-independent aldolase activity toward beta-hydroxyamino acids, producing glycine and aldehydes, via a retro-aldol mechanism. This Proteus mirabilis (strain HI4320) protein is Serine hydroxymethyltransferase.